The sequence spans 788 residues: Serine/threonine-protein kinase MARK2 (788 aa).

The interval 1-46 (MSSARTPLPTLNERDTEQPTLGHLDSKPSSKSNMIRGRNSATSADE) is disordered. Over residues 27–45 (KPSSKSNMIRGRNSATSAD) the composition is skewed to polar residues. The residue at position 40 (S40) is a Phosphoserine. Residues 53–304 (YRLLKTIGKG…LEQIMKDRWM (252 aa)) form the Protein kinase domain. Phosphothreonine; by autocatalysis is present on T58. ATP-binding positions include 59-67 (IGKGNFAKV) and K82. Phosphoserine; by CaMK1 is present on residues S91, S92, and S93. Residue D175 is the Proton acceptor of the active site. The residue at position 208 (T208) is a Phosphothreonine; by LKB1 and TAOK1. S212 is modified (phosphoserine; by GSK3-beta). S274 carries the post-translational modification Phosphoserine; by autocatalysis. A Phosphothreonine; by autocatalysis modification is found at T275. The residue at position 294 (T294) is a Phosphothreonine; by CaMK1. Positions 323 to 362 (YKDPRRTELMVSMGYTREEIQDSLVGQRYNEVMATYLLLG) constitute a UBA domain. The segment at 373 to 632 (ITLKPRPSAD…HSQGRRGASG (260 aa)) is disordered. Phosphoserine occurs at positions 376 and 409. Positions 418 to 432 (PTSNSYSKKTQSNNA) are enriched in polar residues. The span at 433–445 (ENKRPEEDRESGR) shows a compositional bias: basic and acidic residues. At S456 the chain carries Phosphoserine. T467 carries the post-translational modification Phosphothreonine. A compositionally biased stretch (polar residues) spans 467-486 (TPTPSTNSVLSTSTNRSRNS). 2 positions are modified to phosphoserine: S486 and S493. The segment covering 495 to 504 (GQASIQNGKD) has biased composition (polar residues). A compositionally biased stretch (low complexity) spans 511–525 (SRASTASASAAVSAA). Phosphoserine is present on residues S569, S571, and S592. Position 596 is a phosphothreonine; by PKC/PRKCZ (T596). Residues S619 and S722 each carry the phosphoserine modification. The KA1 domain occupies 739–788 (TPGHEDFVQWEMEVCKLPRLSLNGVRFKRISGTSMAFKNIASKIANELKL).

It belongs to the protein kinase superfamily. CAMK Ser/Thr protein kinase family. SNF1 subfamily. As to quaternary structure, homodimer. Interacts with PAK5; leading to inhibit the protein kinase activity. Interacts with MAPT/TAU. Interacts with MTCL1 isoform 1; the interaction is direct and increases MARK2 microtubule-binding ability. Interacts (when phosphorylated at Thr-596) with YWHAZ. Interacts with YWHAB, YWHAG and YWHAQ. In terms of assembly, (Microbial infection) In case of infection, interacts with H.pylori CagA, leading to inhibit kinase activity and junctional and polarity defects. Requires Mg(2+) as cofactor. Autophosphorylated. Phosphorylated at Thr-208 by STK11/LKB1 in complex with STE20-related adapter-alpha (STRADA) pseudo kinase and CAB39. Phosphorylation at Thr-208 by TAOK1 activates the kinase activity, leading to phosphorylation and detachment of MAPT/TAU from microtubules. Phosphorylation at Ser-212 by GSK3-beta (GSK3B) inhibits the kinase activity. Phosphorylation by CaMK1 promotes activity and is required to promote neurite outgrowth. Phosphorylation at Thr-596 by PRKCZ/aPKC in polarized epithelial cells inhibits the kinase activity and promotes binding to 14-3-3 protein YWHAZ, leading to relocation from cell membrane to cytoplasm. High levels of expression in heart, brain, skeletal muscle and pancreas, lower levels observed in lung, liver and kidney.

It localises to the cell membrane. The protein localises to the cytoplasm. The protein resides in the lateral cell membrane. It is found in the cytoskeleton. Its subcellular location is the cell projection. It localises to the dendrite. It carries out the reaction L-seryl-[protein] + ATP = O-phospho-L-seryl-[protein] + ADP + H(+). It catalyses the reaction L-threonyl-[protein] + ATP = O-phospho-L-threonyl-[protein] + ADP + H(+). The enzyme catalyses L-seryl-[tau protein] + ATP = O-phospho-L-seryl-[tau protein] + ADP + H(+). The catalysed reaction is L-threonyl-[tau protein] + ATP = O-phospho-L-threonyl-[tau protein] + ADP + H(+). Its activity is regulated as follows. Inhibited by PAK5; inhibition is independent of the kinase activity of PAK5. Activated by phosphorylation on Thr-208. Inhibited by phosphorylation at Ser-212 and Thr-596. Inhibited by hymenialdisine. Specifically inhibited by the H.pylori CagA peptide FPLKRHDKVDDLSK that mimics host substrates and binds to the kinase substrate-binding site. Its function is as follows. Serine/threonine-protein kinase. Involved in cell polarity and microtubule dynamics regulation. Phosphorylates CRTC2/TORC2, DCX, HDAC7, KIF13B, MAP2, MAP4 and RAB11FIP2. Phosphorylates the microtubule-associated protein MAPT/TAU. Plays a key role in cell polarity by phosphorylating the microtubule-associated proteins MAP2, MAP4 and MAPT/TAU at KXGS motifs, causing detachment from microtubules, and their disassembly. Regulates epithelial cell polarity by phosphorylating RAB11FIP2. Involved in the regulation of neuronal migration through its dual activities in regulating cellular polarity and microtubule dynamics, possibly by phosphorylating and regulating DCX. Regulates axogenesis by phosphorylating KIF13B, promoting interaction between KIF13B and 14-3-3 and inhibiting microtubule-dependent accumulation of KIF13B. Also required for neurite outgrowth and establishment of neuronal polarity. Regulates localization and activity of some histone deacetylases by mediating phosphorylation of HDAC7, promoting subsequent interaction between HDAC7 and 14-3-3 and export from the nucleus. Also acts as a positive regulator of the Wnt signaling pathway, probably by mediating phosphorylation of dishevelled proteins (DVL1, DVL2 and/or DVL3). Modulates the developmental decision to build a columnar versus a hepatic epithelial cell apparently by promoting a switch from a direct to a transcytotic mode of apical protein delivery. Essential for the asymmetric development of membrane domains of polarized epithelial cells. This chain is Serine/threonine-protein kinase MARK2, found in Homo sapiens (Human).